Consider the following 115-residue polypeptide: U3-lycotoxin-Ls1u (115 aa).

The first 20 residues, 1–20 (MKFVLLFGVLLVTLFSYSSA), serve as a signal peptide directing secretion. A propeptide spanning residues 21-44 (EMLDDFDQADEDELLSLIEKEEAR) is cleaved from the precursor. 3 disulfide bridges follow: Cys-48-Cys-63, Cys-55-Cys-72, and Cys-62-Cys-87.

The protein belongs to the neurotoxin 19 (CSTX) family. 01 subfamily. In terms of tissue distribution, expressed by the venom gland.

The protein resides in the secreted. This chain is U3-lycotoxin-Ls1u, found in Lycosa singoriensis (Wolf spider).